An 873-amino-acid polypeptide reads, in one-letter code: Zinc fingers and homeoboxes protein 1 (873 aa).

Residue threonine 36 is modified to Phosphothreonine. A disordered region spans residues 41 to 63 (AKAESVSSDEEVHGSVDSDNQQN). 3 positions are modified to phosphoserine: serine 45, serine 47, and serine 48. Basic and acidic residues predominate over residues 50-63 (EEVHGSVDSDNQQN). 2 C2H2-type zinc fingers span residues 70–93 (YECKYCTFQTPDLNMFTFHVDSEH) and 102–125 (YVCVECNFLTKRYDALSEHNLKYH). A Glycyl lysine isopeptide (Lys-Gly) (interchain with G-Cter in SUMO2) cross-link involves residue lysine 159. The interval 198–247 (VHHNSAEGTSEEKENGVKASQEENAESVSSSALESNTSTSTINRVHPSPA) is disordered. Position 202 is a phosphoserine (serine 202). Positions 223–238 (ESVSSSALESNTSTST) are enriched in low complexity. Residues 272 to 432 (NSNLLPKVLI…QTNVQKSQVP (161 aa)) form a required for dimerization region. Residues 272 to 564 (NSNLLPKVLI…SQQKQSWNPF (293 aa)) are required for interaction with NFYA. A DNA-binding region (homeobox 1) is located at residues 284 to 346 (NSIPTYNAAL…LKHGVSWTPE (63 aa)). The interval 429 to 456 (SQVPAAQPATDTKPATAAVPSSPSVRPE) is disordered. Glycyl lysine isopeptide (Lys-Gly) (interchain with G-Cter in SUMO2) cross-links involve residues lysine 441 and lysine 485. A DNA-binding region (homeobox 2) is located at residues 464-526 (SFGIRAKKTK…YNQRNSKSNQ (63 aa)). Disordered stretches follow at residues 541 to 568 (DSSDETPEPPAAAASQQKQSWNPFPDFA), 627 to 668 (DEKI…CKKT), and 731 to 767 (SSSLNGLSSLRRRGRGRPKGRGRGRPRGRPRGGKRMN). A DNA-binding region (homeobox 3) is located at residues 569 to 630 (PQKFKEKTAE…KTKALKDEKI (62 aa)). Lysine 629 is covalently cross-linked (Glycyl lysine isopeptide (Lys-Gly) (interchain with G-Cter in SUMO2)). Serine 648 carries the post-translational modification Phosphoserine. The homeobox 4 DNA-binding region spans 660–722 (GTGKICKKTP…YAWKNGNLKW (63 aa)). Residues 734-768 (LNGLSSLRRRGRGRPKGRGRGRPRGRPRGGKRMNT) are required for nuclear localization. Basic residues predominate over residues 740–764 (LRRRGRGRPKGRGRGRPRGRPRGGK). Position 774 is a phosphoserine (serine 774). The segment at residues 777-832 (KFKTGTAILKDYYLKHKFLNEQDLDELVNRSHMGYEQVREWFAERQRRSELGIELF) is a DNA-binding region (homeobox 5). The interval 829–873 (IELFEENEEEDEVVDDQEEDEEETDDSDTWEPPRHVKRKLSKSDD) is disordered. The span at 831–857 (LFEENEEEDEVVDDQEEDEEETDDSDT) shows a compositional bias: acidic residues. The interval 831 to 873 (LFEENEEEDEVVDDQEEDEEETDDSDTWEPPRHVKRKLSKSDD) is required for repressor activity. The segment covering 863–873 (HVKRKLSKSDD) has biased composition (basic residues).

The protein belongs to the ZHX family. As to quaternary structure, forms homodimers. Heterodimer (via HD1 domain) with ZHX2 (via HD1 domain). Also forms a heterodimer with ZHX3 which is a prerequisite for repressor activity. Interacts with ATF7IP and NFYA. Interacts (via homeobox domains) with DNMT3B (via PWWP domain). As to expression, widely expressed with highest levels in brain.

The protein resides in the nucleus. Its function is as follows. Acts as a transcriptional repressor. Increases DNMT3B-mediated repressive transcriptional activity when DNMT3B is tethered to DNA. May link molecule between DNMT3B and other co-repressor proteins. The polypeptide is Zinc fingers and homeoboxes protein 1 (Zhx1) (Mus musculus (Mouse)).